A 201-amino-acid polypeptide reads, in one-letter code: Recombination protein RecR (201 aa).

A C4-type zinc finger spans residues 57–72 (CADCRTFTEQEVCNIC). Residues 81–176 (GQICVVESPA…EASRIAHGVP (96 aa)) form the Toprim domain.

The protein belongs to the RecR family.

May play a role in DNA repair. It seems to be involved in an RecBC-independent recombinational process of DNA repair. It may act with RecF and RecO. This is Recombination protein RecR from Shigella boydii serotype 4 (strain Sb227).